A 159-amino-acid polypeptide reads, in one-letter code: Probable metallophosphoesterase MPN_126 (159 aa).

The Mn(2+) site is built by Asp9, His11, Asp34, Asn53, His75, His107, and His109.

Belongs to the metallophosphoesterase superfamily. YfcE family. Requires Mn(2+) as cofactor.

The protein is Probable metallophosphoesterase MPN_126 of Mycoplasma pneumoniae (strain ATCC 29342 / M129 / Subtype 1) (Mycoplasmoides pneumoniae).